The chain runs to 103 residues: Small ribosomal subunit protein uS10 (103 aa).

Belongs to the universal ribosomal protein uS10 family. In terms of assembly, part of the 30S ribosomal subunit.

Functionally, involved in the binding of tRNA to the ribosomes. This Acinetobacter baumannii (strain AB307-0294) protein is Small ribosomal subunit protein uS10.